A 299-amino-acid chain; its full sequence is 4-hydroxybenzoate octaprenyltransferase (299 aa).

8 helical membrane-spanning segments follow: residues 33 to 53 (VGFL…AGGV), 56 to 76 (WWTL…GCVI), 107 to 127 (LLMF…MNQL), 151 to 171 (LPQV…FAAI), 180 to 200 (WLLY…CAMV), 214 to 234 (AILF…LMLF), 247 to 267 (HTYW…FIIA), and 278 to 298 (AFMH…LATT).

This sequence belongs to the UbiA prenyltransferase family. Mg(2+) is required as a cofactor.

It is found in the cell inner membrane. It catalyses the reaction all-trans-octaprenyl diphosphate + 4-hydroxybenzoate = 4-hydroxy-3-(all-trans-octaprenyl)benzoate + diphosphate. It functions in the pathway cofactor biosynthesis; ubiquinone biosynthesis. Functionally, catalyzes the prenylation of para-hydroxybenzoate (PHB) with an all-trans polyprenyl group. Mediates the second step in the final reaction sequence of ubiquinone-8 (UQ-8) biosynthesis, which is the condensation of the polyisoprenoid side chain with PHB, generating the first membrane-bound Q intermediate 3-octaprenyl-4-hydroxybenzoate. In Xylella fastidiosa (strain 9a5c), this protein is 4-hydroxybenzoate octaprenyltransferase.